Here is a 167-residue protein sequence, read N- to C-terminus: MFPMVTGFMNYGQQTVRAARYIGQGFMITLSHANRLPVTIQYPYEKLITSERFRGRIHFEFDKCIACEVCVRVCPIDLPVVDWKLETGIRKKRLLNYSIDFGICIFCGNCVEYCPTNCLSMTEEYELSTYDRHELNYNQIALGRLPMSVINDYTIRTISNSPQIIIK.

4Fe-4S ferredoxin-type domains are found at residues 55-84 and 95-124; these read GRIH…VDWK and LNYS…MTEE. Residues cysteine 64, cysteine 67, cysteine 70, cysteine 74, cysteine 104, cysteine 107, cysteine 110, and cysteine 114 each coordinate [4Fe-4S] cluster.

This sequence belongs to the complex I 23 kDa subunit family. NDH is composed of at least 16 different subunits, 5 of which are encoded in the nucleus. [4Fe-4S] cluster serves as cofactor.

The protein localises to the plastid. It is found in the chloroplast thylakoid membrane. It catalyses the reaction a plastoquinone + NADH + (n+1) H(+)(in) = a plastoquinol + NAD(+) + n H(+)(out). The enzyme catalyses a plastoquinone + NADPH + (n+1) H(+)(in) = a plastoquinol + NADP(+) + n H(+)(out). Its function is as follows. NDH shuttles electrons from NAD(P)H:plastoquinone, via FMN and iron-sulfur (Fe-S) centers, to quinones in the photosynthetic chain and possibly in a chloroplast respiratory chain. The immediate electron acceptor for the enzyme in this species is believed to be plastoquinone. Couples the redox reaction to proton translocation, and thus conserves the redox energy in a proton gradient. The polypeptide is NAD(P)H-quinone oxidoreductase subunit I, chloroplastic (Eucalyptus globulus subsp. globulus (Tasmanian blue gum)).